The following is a 263-amino-acid chain: 4'-phosphopantetheinyl transferase pptA (263 aa).

Belongs to the P-Pant transferase superfamily.

The enzyme catalyses apo-[ACP] + CoA = holo-[ACP] + adenosine 3',5'-bisphosphate + H(+). Its function is as follows. Transfers the 4'-phosphopantetheine moiety from coenzyme A to a Ser of an acyl-carrier-protein. Activates the peptidyl carrier protein (PCP) domains of surfactin synthas. The sequence is that of 4'-phosphopantetheinyl transferase pptA (pptA) from Paxillus involutus (Naked brimcap).